The chain runs to 841 residues: Homeobox-leucine zipper protein ATHB-9 (841 aa).

The span at 1–18 shows a compositional bias: basic and acidic residues; sequence MMAHHSMDDRDSPDKGFD. The interval 1–21 is disordered; that stretch reads MMAHHSMDDRDSPDKGFDSGK. The segment at residues 18–81 is a DNA-binding region (homeobox); that stretch reads DSGKYVRYTP…NRRCREKQRK (64 aa). Residues 85–118 adopt a coiled-coil conformation; it reads RLQTVNRKLSAMNKLLMEENDRLQKQVSNLVYEN. 2 disordered regions span residues 140-162 and 602-630; these read VVVSGQQRQQQNPTHQHPQRDVN and DQKTNPNDHQSASRTRDLASSLDGSTKTD. Residues 145-155 are compositionally biased toward low complexity; sequence QQRQQQNPTHQ. The region spanning 160–388 is the START domain; it reads DVNNPANLLS…IAQETSGEVQ (229 aa). Positions 603-614 are enriched in polar residues; it reads QKTNPNDHQSAS.

The protein belongs to the HD-ZIP homeobox family. Class III subfamily. As to quaternary structure, binds DNA as homodimer. Interacts with ESR1 and ESR2. Interacts with ZPR3.

The protein localises to the nucleus. Functionally, probable transcription factor involved in the determination of adaxial-abaxial polarity in ovule primordium. Specifies adaxial leaf fates. Binds to the DNA sequence 5'-GTAAT[GC]ATTAC-3'. The chain is Homeobox-leucine zipper protein ATHB-9 (ATHB-9) from Arabidopsis thaliana (Mouse-ear cress).